The chain runs to 22 residues: Odorant-binding protein 1 (22 aa).

It belongs to the calycin superfamily. Lipocalin family. In terms of assembly, homodimer. Post-translationally, the N-terminus is blocked.

In terms of biological role, binds the chemical odorant, 2-isobutyl-3-methoxypyrazine. This Oryctolagus cuniculus (Rabbit) protein is Odorant-binding protein 1.